The following is a 437-amino-acid chain: Adenylosuccinate synthetase (437 aa).

GTP is bound by residues 12-18 and 40-42; these read GDEGKGK and GHT. Aspartate 13 functions as the Proton acceptor in the catalytic mechanism. Mg(2+) is bound by residues aspartate 13 and glycine 40. IMP is bound by residues 13–16, 38–41, threonine 128, arginine 142, glutamine 223, threonine 238, and arginine 302; these read DEGK and NAGH. Residue histidine 41 is the Proton donor of the active site. 298-304 contributes to the substrate binding site; sequence TTTGRRR. Residues arginine 304, 330–332, and 412–414 contribute to the GTP site; these read KLD and SLG.

Belongs to the adenylosuccinate synthetase family. In terms of assembly, homodimer. Mg(2+) is required as a cofactor.

Its subcellular location is the cytoplasm. It catalyses the reaction IMP + L-aspartate + GTP = N(6)-(1,2-dicarboxyethyl)-AMP + GDP + phosphate + 2 H(+). It participates in purine metabolism; AMP biosynthesis via de novo pathway; AMP from IMP: step 1/2. Plays an important role in the de novo pathway of purine nucleotide biosynthesis. Catalyzes the first committed step in the biosynthesis of AMP from IMP. This Parasynechococcus marenigrum (strain WH8102) protein is Adenylosuccinate synthetase.